We begin with the raw amino-acid sequence, 263 residues long: Cysteine-rich repeat secretory protein 55 (263 aa).

Residues 1–20 form the signal peptide; it reads MKTLVVKCFLLLALVCSCRA. Gnk2-homologous domains follow at residues 22–126 and 132–240; these read DSIW…QENF and TGAG…FYPF.

This sequence belongs to the cysteine-rich repeat secretory protein family.

The protein resides in the secreted. The protein is Cysteine-rich repeat secretory protein 55 (CRRSP55) of Arabidopsis thaliana (Mouse-ear cress).